Reading from the N-terminus, the 387-residue chain is Chorismate synthase (387 aa).

NADP(+) contacts are provided by arginine 40 and arginine 46. FMN is bound by residues 129 to 131 (RSS), 250 to 251 (QA), glycine 295, 310 to 314 (KPIPT), and arginine 336.

It belongs to the chorismate synthase family. As to quaternary structure, homotetramer. FMNH2 is required as a cofactor.

It carries out the reaction 5-O-(1-carboxyvinyl)-3-phosphoshikimate = chorismate + phosphate. Its pathway is metabolic intermediate biosynthesis; chorismate biosynthesis; chorismate from D-erythrose 4-phosphate and phosphoenolpyruvate: step 7/7. Functionally, catalyzes the anti-1,4-elimination of the C-3 phosphate and the C-6 proR hydrogen from 5-enolpyruvylshikimate-3-phosphate (EPSP) to yield chorismate, which is the branch point compound that serves as the starting substrate for the three terminal pathways of aromatic amino acid biosynthesis. This reaction introduces a second double bond into the aromatic ring system. In Desulforamulus reducens (strain ATCC BAA-1160 / DSM 100696 / MI-1) (Desulfotomaculum reducens), this protein is Chorismate synthase.